We begin with the raw amino-acid sequence, 135 residues long: Basic phospholipase A2 6 (135 aa).

Cystine bridges form between Cys-28/Cys-87, Cys-42/Cys-134, Cys-44/Cys-60, Cys-59/Cys-115, Cys-66/Cys-108, Cys-76/Cys-101, and Cys-94/Cys-106. Residues Tyr-43, Gly-45, and Gly-47 each coordinate Ca(2+). Residue His-63 is part of the active site. Residue Asp-64 participates in Ca(2+) binding. Residue Asp-109 is part of the active site.

The protein belongs to the phospholipase A2 family. Group I subfamily. D49 sub-subfamily. Requires Ca(2+) as cofactor. As to expression, expressed by the venom gland.

It localises to the secreted. The catalysed reaction is a 1,2-diacyl-sn-glycero-3-phosphocholine + H2O = a 1-acyl-sn-glycero-3-phosphocholine + a fatty acid + H(+). Functionally, snake venom phospholipase A2 (PLA2) that inhibits neuromuscular transmission by blocking acetylcholine release from the nerve termini. PLA2 catalyzes the calcium-dependent hydrolysis of the 2-acyl groups in 3-sn-phosphoglycerides. Very weakly suppress the acetylcholine (ACh)-evoked current mediated by alpha-7-similar nAChRs in L.stagnalis neurons. In Bungarus fasciatus (Banded krait), this protein is Basic phospholipase A2 6.